A 479-amino-acid chain; its full sequence is Aspartyl/glutamyl-tRNA(Asn/Gln) amidotransferase subunit B (479 aa).

It belongs to the GatB/GatE family. GatB subfamily. Heterotrimer of A, B and C subunits.

The enzyme catalyses L-glutamyl-tRNA(Gln) + L-glutamine + ATP + H2O = L-glutaminyl-tRNA(Gln) + L-glutamate + ADP + phosphate + H(+). The catalysed reaction is L-aspartyl-tRNA(Asn) + L-glutamine + ATP + H2O = L-asparaginyl-tRNA(Asn) + L-glutamate + ADP + phosphate + 2 H(+). Its function is as follows. Allows the formation of correctly charged Asn-tRNA(Asn) or Gln-tRNA(Gln) through the transamidation of misacylated Asp-tRNA(Asn) or Glu-tRNA(Gln) in organisms which lack either or both of asparaginyl-tRNA or glutaminyl-tRNA synthetases. The reaction takes place in the presence of glutamine and ATP through an activated phospho-Asp-tRNA(Asn) or phospho-Glu-tRNA(Gln). The sequence is that of Aspartyl/glutamyl-tRNA(Asn/Gln) amidotransferase subunit B from Mycoplasma capricolum subsp. capricolum (strain California kid / ATCC 27343 / NCTC 10154).